Here is a 319-residue protein sequence, read N- to C-terminus: Annexin A5 (319 aa).

An N-acetylalanine modification is found at alanine 2. Annexin repeat units follow at residues 13 to 84 (FDGR…AMMK), 85 to 156 (PSRL…VLLQ), 168 to 240 (AQVE…AVVK), and 244 to 315 (SIPA…LLCG). Lysine 27 participates in a covalent cross-link: Glycyl lysine isopeptide (Lys-Gly) (interchain with G-Cter in SUMO1); alternate. Lysine 27 participates in a covalent cross-link: Glycyl lysine isopeptide (Lys-Gly) (interchain with G-Cter in SUMO2); alternate. Serine 35 carries the phosphoserine modification. An N6-acetyllysine mark is found at lysine 68, lysine 74, lysine 77, lysine 95, and lysine 99. Lysine 288 carries the post-translational modification N6-succinyllysine. A [IL]-x-C-x-x-[DE] motif motif is present at residues 312–318 (LLCGGED).

It belongs to the annexin family. In terms of assembly, monomer. Binds ATRX and EIF5B. In terms of processing, S-nitrosylation is induced by interferon-gamma and oxidatively-modified low-densitity lipoprotein (LDL(ox)) possibly implicating the iNOS-S100A8/9 transnitrosylase complex.

Its function is as follows. This protein is an anticoagulant protein that acts as an indirect inhibitor of the thromboplastin-specific complex, which is involved in the blood coagulation cascade. This chain is Annexin A5 (Anxa5), found in Mus musculus (Mouse).